A 256-amino-acid polypeptide reads, in one-letter code: Follistatin-related protein 3 (256 aa).

A signal peptide spans 1–23 (MRSGALWPLLWGALVWTVGSVGA). A TB domain is found at 34–105 (GVCWLQQGRE…SCDGVECGPG (72 aa)). 8 cysteine pairs are disulfide-bonded: C36–C59, C46–C90, C60–C93, C97–C108, C102–C117, C119–C151, C123–C144, and C133–C165. N71 is a glycosylation site (N-linked (GlcNAc...) asparagine). The Follistatin-like 1 domain maps to 97-117 (CDGVECGPGKACRMLGGRPHC). Kazal-like domains are found at residues 111–167 (LGGR…RCQK) and 187–243 (SAHC…ICTG). Positions 168–191 (SCAQVVCPRPQSCLVDQTGSAHCV) constitute a Follistatin-like 2 domain. 3 disulfides stabilise this stretch: C193/C227, C198/C220, and C209/C241. An N-linked (GlcNAc...) asparagine glycan is attached at N213.

Interacts with INHBA and INHBB. Interacts with FN1. Interacts with ADAM12. Interacts with MLLT10; the interaction enhances MLLT10 in vitro transcriptional activity and self-association. Interacts with MSTN. In terms of tissue distribution, abundantly expressed in heart, lung, kidney and testis. Continuously expressed in embryonic heart.

The protein localises to the secreted. Its subcellular location is the nucleus. In terms of biological role, the secreted form is a binding and antagonizing protein for members of the TGF-beta family, such as activin, BMP2 and MSTN. Inhibits activin A-, activin B-, BMP2- and MSDT-induced cellular signaling; more effective on activin A than on activin B. Involved in bone formation; inhibits osteoclast differentiation. Involved in hematopoiesis; involved in differentiation of hemopoietic progenitor cells, increases hematopoietic cell adhesion to fibronectin and seems to contribute to the adhesion of hematopoietic precursor cells to the bone marrow stroma. The nuclear form is probably involved in transcriptional regulation via interaction with MLLT10. The protein is Follistatin-related protein 3 (Fstl3) of Mus musculus (Mouse).